The primary structure comprises 427 residues: Sensor histidine kinase ArsS (427 aa).

2 consecutive transmembrane segments (helical) span residues 3–23 and 131–151; these read FSIF…FGAF and NYFL…LFVL. The 53-residue stretch at 151 to 203 folds into the HAMP domain; sequence LQSLLPLRELRSQVKPFAQGDKSVSCKSKQKDEIGDLANEFDNCILKINAMNE. A Histidine kinase domain is found at 211–398; it reads SIMHELRTPI…LSYHYSNGRI (188 aa). The residue at position 214 (histidine 214) is a Phosphohistidine; by autocatalysis.

In terms of processing, autophosphorylated.

It is found in the membrane. It catalyses the reaction ATP + protein L-histidine = ADP + protein N-phospho-L-histidine.. Its function is as follows. Member of the two-component regulatory system ArsS/ArsR that regulates genes involved in biofilm formation and acid adaptation by acting on major ammonia-producing pathways. Functions as a sensor protein kinase which is autophosphorylated at a histidine residue and transfers its phosphate group to the conserved aspartic acid residue in the regulatory domain of ArsR. In turn, ArsR binds to the upstream promoter regions of target genes including ureA, amiE and amiF to positively regulate their expression in response to acidic pH. Also participates in acidic acclimatation in a phosphorylation-independent pathway by regulating acid-induced trafficking of urease and its accessory proteins to the inner membrane. The polypeptide is Sensor histidine kinase ArsS (Helicobacter pylori (strain ATCC 700392 / 26695) (Campylobacter pylori)).